Consider the following 182-residue polypeptide: MRILGIDPGLLTTGFGVVDSDGHALSYVASGTISTRHLGSGNLPARLKVLFDGIAEIAARYQPDASAVEIIFVNVNPQSTLLLGQARGACVTSLVNSNLSVAEYTALQMKKAVAGHGQAAKAQVQEMVKRLLDLPGLPGADAADALGIAITHAQVGRSMARLAEAAELSKTHAGTYRQGRSR.

Residues aspartate 7, glutamate 69, and aspartate 141 contribute to the active site. Mg(2+) contacts are provided by aspartate 7, glutamate 69, and aspartate 141.

Belongs to the RuvC family. As to quaternary structure, homodimer which binds Holliday junction (HJ) DNA. The HJ becomes 2-fold symmetrical on binding to RuvC with unstacked arms; it has a different conformation from HJ DNA in complex with RuvA. In the full resolvosome a probable DNA-RuvA(4)-RuvB(12)-RuvC(2) complex forms which resolves the HJ. It depends on Mg(2+) as a cofactor.

It is found in the cytoplasm. It carries out the reaction Endonucleolytic cleavage at a junction such as a reciprocal single-stranded crossover between two homologous DNA duplexes (Holliday junction).. The RuvA-RuvB-RuvC complex processes Holliday junction (HJ) DNA during genetic recombination and DNA repair. Endonuclease that resolves HJ intermediates. Cleaves cruciform DNA by making single-stranded nicks across the HJ at symmetrical positions within the homologous arms, yielding a 5'-phosphate and a 3'-hydroxyl group; requires a central core of homology in the junction. The consensus cleavage sequence is 5'-(A/T)TT(C/G)-3'. Cleavage occurs on the 3'-side of the TT dinucleotide at the point of strand exchange. HJ branch migration catalyzed by RuvA-RuvB allows RuvC to scan DNA until it finds its consensus sequence, where it cleaves and resolves the cruciform DNA. This Variovorax paradoxus (strain S110) protein is Crossover junction endodeoxyribonuclease RuvC.